The chain runs to 137 residues: ATP synthase epsilon chain (137 aa).

The protein belongs to the ATPase epsilon chain family. In terms of assembly, F-type ATPases have 2 components, CF(1) - the catalytic core - and CF(0) - the membrane proton channel. CF(1) has five subunits: alpha(3), beta(3), gamma(1), delta(1), epsilon(1). CF(0) has three main subunits: a, b and c.

It is found in the cell inner membrane. Its function is as follows. Produces ATP from ADP in the presence of a proton gradient across the membrane. The sequence is that of ATP synthase epsilon chain from Yersinia pestis bv. Antiqua (strain Antiqua).